Here is a 1010-residue protein sequence, read N- to C-terminus: Retinoblastoma-related protein 1 (1010 aa).

Residues 1 to 23 (MEGAAPPASSGSEVTGAGSGKVD) are disordered. Positions 419-619 (TPVSTAMTTA…EKGSSMYNSL (201 aa)) are domain A. The segment at 419–861 (TPVSTAMTTA…NEVFIPTVKP (443 aa)) is pocket. The tract at residues 620-730 (IVARPTLSAE…PAAGGELCAE (111 aa)) is spacer. Residues 657–679 (LPPLPFQKQEHSPDKDEVRSPKR) form a disordered region. A compositionally biased stretch (basic and acidic residues) spans 664–679 (KQEHSPDKDEVRSPKR). A domain B region spans residues 731–861 (TGIGVFLSKI…NEVFIPTVKP (131 aa)). The tract at residues 868–898 (SGTSPNKKNEEKCAADGPYPESPRLSRFPNL) is disordered.

It belongs to the retinoblastoma protein (RB) family.

It is found in the nucleus. In terms of biological role, regulator of biological processes that recruits a histone deacetylase to control gene transcription. May play a role in the entry into mitosis, negatively regulating the cell proliferation. Formation of stable complexes with geminiviridae replication-associated proteins may create a cellular environment which favors viral DNA replication. In Oryza sativa subsp. indica (Rice), this protein is Retinoblastoma-related protein 1 (RBR1).